We begin with the raw amino-acid sequence, 241 residues long: Beta-casein (241 aa).

A signal peptide spans 1 to 15; the sequence is MKILILACLVALALA. The interval 21–45 is disordered; sequence LNVSSETVESLSSNEPDSSSEESIT. S24 is subject to Phosphoserine; in form 4-P, form 5-P, form 6-P and form 7-P. S25 bears the Phosphoserine; in form 7-P mark. Phosphothreonine; in form 6-P and form 7-P is present on T27. 2 positions are modified to phosphoserine: S30 and S32. S33 carries the phosphoserine; in form 5-P, form 6-P and form 7-P modification. S38, S39, and S40 each carry phosphoserine; in form 4-P, form 5-P, form 6-P and form 7-P. N150 is subject to Deamidated asparagine.

It belongs to the beta-casein family. There are at least five different forms found in milk, with varying degrees of phosphorylation. These include form 3-P which is phosphorylated at three sites that have not been determined, this form is present in very low amounts, form 4-P which is phosphorylated at four sites, form 5-P which is phosphorylated at five sites, form 6-P which is phosphorylated at six sites, and form 7-P which is phosphorylated at seven sites. Post-translationally, spontaneous deamidation of Asn-150 produces aspartate or isoaspartate. As to expression, mammary gland specific. Secreted in milk.

The protein resides in the secreted. Its function is as follows. Important role in determination of the surface properties of the casein micelles. This chain is Beta-casein, found in Equus caballus (Horse).